The sequence spans 248 residues: UPF0246 protein MYPE6270 (248 aa).

It belongs to the UPF0246 family.

The sequence is that of UPF0246 protein MYPE6270 from Malacoplasma penetrans (strain HF-2) (Mycoplasma penetrans).